The primary structure comprises 549 residues: Undecaprenyl phosphate-alpha-4-amino-4-deoxy-L-arabinose arabinosyl transferase 2 (549 aa).

A run of 12 helical transmembrane segments spans residues 9–29 (LLLG…GLWI), 80–102 (LFGV…FLIA), 112–132 (SFVC…AGYA), 133–153 (NLDP…WFAL), 176–196 (FMTK…PWML), 204–224 (LLLY…PWAL), 259–279 (FYLP…PVAF), 290–310 (GIAF…LSNG), 312–332 (LPTY…HALA), 342–362 (ALGL…IGLV), 377–397 (SLVL…LQAF), and 402–422 (CWAA…AALP).

Belongs to the glycosyltransferase 83 family.

Its subcellular location is the cell inner membrane. The catalysed reaction is 4-amino-4-deoxy-alpha-L-arabinopyranosyl di-trans,octa-cis-undecaprenyl phosphate + lipid IVA = lipid IIA + di-trans,octa-cis-undecaprenyl phosphate.. It participates in lipopolysaccharide metabolism; 4-amino-4-deoxy-beta-L-arabinose-lipid A biosynthesis. Its function is as follows. Catalyzes the transfer of the L-Ara4N moiety of the glycolipid undecaprenyl phosphate-alpha-L-Ara4N to lipid A. The modified arabinose is attached to lipid A and is required for resistance to polymyxin and cationic antimicrobial peptides. The sequence is that of Undecaprenyl phosphate-alpha-4-amino-4-deoxy-L-arabinose arabinosyl transferase 2 from Pseudomonas fluorescens (strain Pf0-1).